We begin with the raw amino-acid sequence, 102 residues long: Co-chaperonin GroES (102 aa).

It belongs to the GroES chaperonin family. In terms of assembly, heptamer of 7 subunits arranged in a ring. Interacts with the chaperonin GroEL.

It is found in the cytoplasm. Functionally, together with the chaperonin GroEL, plays an essential role in assisting protein folding. The GroEL-GroES system forms a nano-cage that allows encapsulation of the non-native substrate proteins and provides a physical environment optimized to promote and accelerate protein folding. GroES binds to the apical surface of the GroEL ring, thereby capping the opening of the GroEL channel. The sequence is that of Co-chaperonin GroES from Streptomyces avermitilis (strain ATCC 31267 / DSM 46492 / JCM 5070 / NBRC 14893 / NCIMB 12804 / NRRL 8165 / MA-4680).